Consider the following 146-residue polypeptide: Hemoglobin subunit beta (146 aa).

The Globin domain occupies 2 to 146 (FLTAEEKGLV…VASALAHRYH (145 aa)). Residue Ser-44 is modified to Phosphoserine. At Lys-59 the chain carries N6-acetyllysine. His-63 lines the heme b pocket. Residue Lys-82 is modified to N6-acetyllysine. Heme b is bound at residue His-92. S-nitrosocysteine is present on Cys-93.

Belongs to the globin family. As to quaternary structure, heterotetramer of two alpha chains and two beta chains. As to expression, red blood cells.

In terms of biological role, involved in oxygen transport from the lung to the various peripheral tissues. The polypeptide is Hemoglobin subunit beta (HBB) (Paguma larvata (Masked palm civet)).